The chain runs to 596 residues: Succinate dehydrogenase flavoprotein subunit (596 aa).

FAD is bound by residues 18-23 (GAGGAG), 41-56 (TKLFPTRSHTVAAQGG), and aspartate 225. Residue histidine 49 is modified to Tele-8alpha-FAD histidine. 2 residues coordinate substrate: histidine 246 and threonine 258. Arginine 290 acts as the Proton acceptor in catalysis. Histidine 357 provides a ligand contact to substrate. Residue glutamate 391 participates in FAD binding. Substrate is bound at residue arginine 402. 407–408 (SL) is a binding site for FAD.

This sequence belongs to the FAD-dependent oxidoreductase 2 family. FRD/SDH subfamily. In terms of assembly, part of an enzyme complex containing four subunits: a flavoprotein, an iron-sulfur, cytochrome b-556, and a hydrophobic anchor protein. FAD is required as a cofactor.

The protein resides in the cell inner membrane. The enzyme catalyses a quinone + succinate = fumarate + a quinol. The protein operates within carbohydrate metabolism; tricarboxylic acid cycle; fumarate from succinate (bacterial route): step 1/1. The chain is Succinate dehydrogenase flavoprotein subunit (sdhA) from Rickettsia conorii (strain ATCC VR-613 / Malish 7).